Reading from the N-terminus, the 199-residue chain is uncharacterized protein (199 aa).

This is an uncharacterized protein from Methanocaldococcus jannaschii (strain ATCC 43067 / DSM 2661 / JAL-1 / JCM 10045 / NBRC 100440) (Methanococcus jannaschii).